The sequence spans 180 residues: ATP-dependent protease subunit HslV (180 aa).

Residue threonine 7 is part of the active site. Residues glycine 165, cysteine 168, and threonine 171 each coordinate Na(+).

Belongs to the peptidase T1B family. HslV subfamily. A double ring-shaped homohexamer of HslV is capped on each side by a ring-shaped HslU homohexamer. The assembly of the HslU/HslV complex is dependent on binding of ATP.

It localises to the cytoplasm. It catalyses the reaction ATP-dependent cleavage of peptide bonds with broad specificity.. With respect to regulation, allosterically activated by HslU binding. Protease subunit of a proteasome-like degradation complex believed to be a general protein degrading machinery. The sequence is that of ATP-dependent protease subunit HslV from Bacillus cereus (strain Q1).